Reading from the N-terminus, the 362-residue chain is Heme A synthase (362 aa).

Transmembrane regions (helical) follow at residues 11-31 (AAIR…VLVG), 102-122 (VIGM…AVSG), 128-148 (LWLI…MVAS), 159-179 (VRLA…VWTL), and 198-218 (AWAL…VAGL). His262 serves as a coordination point for heme. 3 helical membrane-spanning segments follow: residues 264–286 (MTAY…AGAG), 297–317 (LAAI…VVPI), and 318–338 (SLAL…VLQA). Heme is bound at residue His323.

It belongs to the COX15/CtaA family. Type 2 subfamily. Interacts with CtaB. Heme b serves as cofactor.

The protein resides in the cell membrane. It catalyses the reaction Fe(II)-heme o + 2 A + H2O = Fe(II)-heme a + 2 AH2. It participates in porphyrin-containing compound metabolism; heme A biosynthesis; heme A from heme O: step 1/1. Its function is as follows. Catalyzes the conversion of heme O to heme A by two successive hydroxylations of the methyl group at C8. The first hydroxylation forms heme I, the second hydroxylation results in an unstable dihydroxymethyl group, which spontaneously dehydrates, resulting in the formyl group of heme A. In Bradyrhizobium sp. (strain ORS 278), this protein is Heme A synthase.